The primary structure comprises 312 residues: Phospho-N-acetylmuramoyl-pentapeptide-transferase (312 aa).

A run of 9 helical transmembrane segments spans residues 1 to 21 (MMVV…HYSK), 48 to 68 (GVAF…FGGI), 76 to 96 (EVMI…DDFL), 115 to 135 (FPLQ…LASH), 140 to 160 (GFMS…FVMV), 165 to 185 (AFNF…IVLL), 214 to 234 (VFMG…AYAL), 238 to 258 (VWLL…VVIQ), and 289 to 309 (VTLR…WLMG).

The protein belongs to the glycosyltransferase 4 family. MraY subfamily. Mg(2+) serves as cofactor.

Its subcellular location is the cell membrane. The enzyme catalyses UDP-N-acetyl-alpha-D-muramoyl-L-alanyl-gamma-D-glutamyl-meso-2,6-diaminopimeloyl-D-alanyl-D-alanine + di-trans,octa-cis-undecaprenyl phosphate = di-trans,octa-cis-undecaprenyl diphospho-N-acetyl-alpha-D-muramoyl-L-alanyl-D-glutamyl-meso-2,6-diaminopimeloyl-D-alanyl-D-alanine + UMP. It functions in the pathway cell wall biogenesis; peptidoglycan biosynthesis. Functionally, catalyzes the initial step of the lipid cycle reactions in the biosynthesis of the cell wall peptidoglycan: transfers peptidoglycan precursor phospho-MurNAc-pentapeptide from UDP-MurNAc-pentapeptide onto the lipid carrier undecaprenyl phosphate, yielding undecaprenyl-pyrophosphoryl-MurNAc-pentapeptide, known as lipid I. This is Phospho-N-acetylmuramoyl-pentapeptide-transferase from Deinococcus radiodurans (strain ATCC 13939 / DSM 20539 / JCM 16871 / CCUG 27074 / LMG 4051 / NBRC 15346 / NCIMB 9279 / VKM B-1422 / R1).